A 443-amino-acid polypeptide reads, in one-letter code: 3-ketoacyl-CoA thiolase 1, peroxisomal (443 aa).

The N-terminal 30 residues, 1–30 (MEKATERQRILLRHLQPSSSSDASLSASAC), are a transit peptide targeting the peroxisome. C130 serves as the catalytic Acyl-thioester intermediate. Residues H385 and C417 each act as proton acceptor in the active site.

Belongs to the thiolase-like superfamily. Thiolase family. As to quaternary structure, homodimer. As to expression, low levels in seedlings and leaves.

It is found in the peroxisome. It catalyses the reaction an acyl-CoA + acetyl-CoA = a 3-oxoacyl-CoA + CoA. It functions in the pathway lipid metabolism; fatty acid metabolism. Functionally, involved in fatty-acid beta-oxidation prior to gluconeogenesis during germination and subsequent seedling growth. Implicated in jasmonic acid (JA) biosynthesis. The protein is 3-ketoacyl-CoA thiolase 1, peroxisomal (KAT1) of Arabidopsis thaliana (Mouse-ear cress).